Consider the following 245-residue polypeptide: DnaJ homolog subfamily B member 6-B (245 aa).

The 67-residue stretch at 3-69 (EYYDVLGVQR…KKRDIYDKYG (67 aa)) folds into the J domain.

Homooligomer.

It is found in the cytoplasm. The protein localises to the perinuclear region. It localises to the nucleus. Its function is as follows. Has a stimulatory effect on the ATPase activity of HSP70 in a dose-dependent and time-dependent manner and hence acts as a co-chaperone of HSP70. Plays an indispensable role in the organization of KRT8/KRT18 filaments. Acts as an endogenous molecular chaperone for neuronal proteins including huntingtin. Suppresses aggregation and toxicity of polyglutamine-containing, aggregation-prone proteins. Also reduces cellular toxicity and caspase-3 activity. The chain is DnaJ homolog subfamily B member 6-B (dnajb6-b) from Xenopus laevis (African clawed frog).